Reading from the N-terminus, the 345-residue chain is Probable fructokinase-3 (345 aa).

Belongs to the carbohydrate kinase PfkB family.

It carries out the reaction D-fructose + ATP = D-fructose 6-phosphate + ADP + H(+). Its pathway is glycan biosynthesis; starch biosynthesis. Functionally, may play an important role in maintaining the flux of carbon towards starch formation. This Arabidopsis thaliana (Mouse-ear cress) protein is Probable fructokinase-3.